Consider the following 441-residue polypeptide: Protein eva-1 homolog C (441 aa).

Positions 1 to 23 are disordered; the sequence is MLLPGRARQPPTPQPVQHPGLRR. Positions 1-48 are cleaved as a signal peptide; sequence MLLPGRARQPPTPQPVQHPGLRRQVEPPGQLLRLFYCTVLVCSKEISA. Over 49–322 the chain is Extracellular; the sequence is LTDFSGYLTK…AYIRAHPERA (274 aa). Asn62 is a glycosylation site (N-linked (GlcNAc...) asparagine). The region spanning 67–159 is the SUEL-type lectin 1 domain; the sequence is ACDGDYLNLQ…KYLLVSFKCQ (93 aa). N-linked (GlcNAc...) asparagine glycosylation occurs at Asn165. The region spanning 168–260 is the SUEL-type lectin 2 domain; sequence VCEDQELKLH…KYLTVTYACV (93 aa). A helical membrane pass occupies residues 323–343; that stretch reads ALLFVSSVCIGLALTLCALVI. Over 344–441 the chain is Cytoplasmic; the sequence is RESCAKDFRD…SLPRNMGQFY (98 aa). The tract at residues 362-390 is disordered; the sequence is VPGSDKVEEDSEDEEEEEDPSESDFPGEL. Positions 368–383 are enriched in acidic residues; the sequence is VEEDSEDEEEEEDPSE.

This sequence belongs to the EVA1 family. In terms of tissue distribution, ubiquitous.

Its subcellular location is the membrane. In terms of biological role, binds heparin. The polypeptide is Protein eva-1 homolog C (EVA1C) (Homo sapiens (Human)).